Consider the following 777-residue polypeptide: Spastin (777 aa).

Low complexity-rich tracts occupy residues 1-24, 51-76, and 85-94; these read MVRT…KSNN, HAHS…SSSP, and DDLTPTGSSP. The tract at residues 1–103 is disordered; that stretch reads MVRTKSSSSS…PRSCNGRGHS (103 aa). Topologically, residues 1 to 116 are cytoplasmic; the sequence is MVRTKSSSSS…KQNLYVVSFP (116 aa). Residues 1–215 form a required for localization to punctate cytoplasmic foci region; the sequence is MVRTKSSSSS…RALQPLEMAT (215 aa). The segment at residues 117-137 is an intramembrane region (helical); that stretch reads IIFLFNVLRSLIYQLFCIFRY. At 138–777 the chain is on the cytoplasmic side; the sequence is LYGASTKVLY…WSQDYGDITI (640 aa). Residues 213 to 777 form a sufficient for interaction with microtubules and microtubule severing region; it reads MATNRPGGGY…WSQDYGDITI (565 aa). Residues 238 to 313 enclose the MIT domain; that stretch reads HRRAFEYISK…SMARDRLHFL (76 aa). Positions 327–474 are disordered; it reads LKEKQPAPKQ…SSGSGASTPM (148 aa). Composition is skewed to polar residues over residues 372-389, 406-425, and 444-460; these read QNGT…TATG, PVTN…TTVG, and QFSS…RTPI. A compositionally biased stretch (low complexity) spans 461–471; it reads NNNASSGSGAS. The interval 462–474 is required for interaction with microtubules; the sequence is NNASSGSGASTPM. 542-549 contacts ATP; it reads GPPGNGKT.

The protein belongs to the AAA ATPase family. Spastin subfamily. As to quaternary structure, homohexamer. The homohexamer is stabilized by ATP-binding. The homohexamer may adopt a ring conformation through which microtubules pass prior to being severed. Interacts with microtubules. Interacts with atl; may be involved in microtubule dynamics.

It localises to the membrane. The protein localises to the cytoplasm. It is found in the cytoskeleton. The protein resides in the microtubule organizing center. Its subcellular location is the centrosome. It localises to the chromosome. The protein localises to the lipid droplet. It carries out the reaction n ATP + n H2O + a microtubule = n ADP + n phosphate + (n+1) alpha/beta tubulin heterodimers.. Its function is as follows. ATP-dependent microtubule severing protein. Stimulates microtubule minus-end depolymerization and poleward microtubule flux in the mitotic spindle. Regulates microtubule stability in the neuromuscular junction synapse. Involved in lipid metabolism by regulating the size and distribution of lipid droplets. Involved in axon regeneration by regulating microtubule severing. This is Spastin from Drosophila willistoni (Fruit fly).